The following is a 212-amino-acid chain: Glycerol-3-phosphate acyltransferase (212 aa).

5 consecutive transmembrane segments (helical) span residues 9 to 29, 67 to 87, 95 to 115, 128 to 148, and 168 to 190; these read AACL…GYLL, GPAL…VLLA, WLQV…VWLG, MFLG…MAVI, and LMVV…LMVL.

It belongs to the PlsY family. Probably interacts with PlsX.

The protein localises to the cell inner membrane. The enzyme catalyses an acyl phosphate + sn-glycerol 3-phosphate = a 1-acyl-sn-glycero-3-phosphate + phosphate. It functions in the pathway lipid metabolism; phospholipid metabolism. Catalyzes the transfer of an acyl group from acyl-phosphate (acyl-PO(4)) to glycerol-3-phosphate (G3P) to form lysophosphatidic acid (LPA). This enzyme utilizes acyl-phosphate as fatty acyl donor, but not acyl-CoA or acyl-ACP. In Parasynechococcus marenigrum (strain WH8102), this protein is Glycerol-3-phosphate acyltransferase.